Consider the following 951-residue polypeptide: Valine--tRNA ligase (951 aa).

The short motif at 42–52 is the 'HIGH' region element; sequence PNVTGSLHMGH. A 'KMSKS' region motif is present at residues 554 to 558; the sequence is KMSKS. Lys-557 is a binding site for ATP. Residues 880–944 adopt a coiled-coil conformation; the sequence is AGLINKEDEL…AEAKAKLIEQ (65 aa).

The protein belongs to the class-I aminoacyl-tRNA synthetase family. ValS type 1 subfamily. Monomer.

Its subcellular location is the cytoplasm. It catalyses the reaction tRNA(Val) + L-valine + ATP = L-valyl-tRNA(Val) + AMP + diphosphate. In terms of biological role, catalyzes the attachment of valine to tRNA(Val). As ValRS can inadvertently accommodate and process structurally similar amino acids such as threonine, to avoid such errors, it has a 'posttransfer' editing activity that hydrolyzes mischarged Thr-tRNA(Val) in a tRNA-dependent manner. This Shigella boydii serotype 4 (strain Sb227) protein is Valine--tRNA ligase.